A 276-amino-acid polypeptide reads, in one-letter code: Secretagogin (276 aa).

EF-hand domains follow at residues 12–47 (LDAA…LLAK), 105–140 (DNSV…LFLH), 149–184 (ELEE…QENF), 197–232 (ERKR…MMEL), and 240–276 (VDLD…KINP). Ca(2+)-binding residues include aspartate 118, aspartate 120, serine 122, glutamate 129, aspartate 162, asparagine 164, aspartate 166, arginine 168, aspartate 173, aspartate 210, serine 212, threonine 214, glutamate 221, aspartate 254, asparagine 256, aspartate 258, lysine 260, and glutamate 265.

As to expression, highly expressed in pancreas, in particular in pancreatic islets and pancreatic beta-cells. Detected in prostate, adrenal gland, small intestine, stomach and thyroid (at protein level).

It localises to the cytoplasm. The protein localises to the secreted. It is found in the cytoplasmic vesicle. The protein resides in the secretory vesicle membrane. The polypeptide is Secretagogin (Scgn) (Rattus norvegicus (Rat)).